The primary structure comprises 158 residues: MALLTNGKGFIRALEKSGSLAVYAPLEGGFEGRYQRRLRTNGYHTFSLTARGLGDVSAYLMGVHGVRPPHLGKKNIGQEAAVGPVYFVPPIAAYQLETLPPKSKGLVLWILEGFILSQTELEYLANLPTLEPRLKVVIELGGERYFSWKPLPEVIKVA.

This sequence belongs to the complex I NdhN subunit family. As to quaternary structure, NDH-1 can be composed of about 15 different subunits; different subcomplexes with different compositions have been identified which probably have different functions.

It is found in the cellular thylakoid membrane. It carries out the reaction a plastoquinone + NADH + (n+1) H(+)(in) = a plastoquinol + NAD(+) + n H(+)(out). The catalysed reaction is a plastoquinone + NADPH + (n+1) H(+)(in) = a plastoquinol + NADP(+) + n H(+)(out). In terms of biological role, NDH-1 shuttles electrons from an unknown electron donor, via FMN and iron-sulfur (Fe-S) centers, to quinones in the respiratory and/or the photosynthetic chain. The immediate electron acceptor for the enzyme in this species is believed to be plastoquinone. Couples the redox reaction to proton translocation, and thus conserves the redox energy in a proton gradient. Cyanobacterial NDH-1 also plays a role in inorganic carbon-concentration. The chain is NAD(P)H-quinone oxidoreductase subunit N from Rippkaea orientalis (strain PCC 8801 / RF-1) (Cyanothece sp. (strain PCC 8801)).